Consider the following 423-residue polypeptide: G protein-activated inward rectifier potassium channel 2 (423 aa).

Residues 1 to 89 (MAKLTESMTN…IFTTLVDLKW (89 aa)) are Cytoplasmic-facing. Phosphoserine occurs at positions 16 and 23. Residues 90 to 114 (RFNLLIFVMVYTVTWLFFGMIWWLI) traverse the membrane as a helical segment. The Extracellular portion of the chain corresponds to 115–138 (AYIRGDMDHIEDPSWTPCVTNLNG). The segment at residues 139–150 (FVSAFLFSIETE) is an intramembrane region (helical; Pore-forming). The segment at residues 151-157 (TTIGYGY) is an intramembrane region (pore-forming). The Selectivity filter motif lies at 152–157 (TIGYGY). At 158–166 (RVITDKCPE) the chain is on the extracellular side. A helical transmembrane segment spans residues 167 to 188 (GIILLLIQSVLGSIVNAFMVGC). Over 189–423 (MFVKISQPKK…VANLENESKV (235 aa)) the chain is Cytoplasmic. The disordered stretch occupies residues 390 to 423 (NQHAELETEEEEKNLEEQTERNGDVANLENESKV). The PDZ-binding motif lies at 420 to 423 (ESKV).

Belongs to the inward rectifier-type potassium channel (TC 1.A.2.1) family. KCNJ6 subfamily. In terms of assembly, associates with KCNJ3/GIRK1 or KCNJ5/GRIK4 to form a G-protein-activated heteromultimer pore-forming unit. The resulting inward current is much larger. Interacts (via PDZ-binding motif) with SNX27 (via PDZ domain); the interaction is required when endocytosed to prevent degradation in lysosomes and promote recycling to the plasma membrane.

Its subcellular location is the membrane. It carries out the reaction K(+)(in) = K(+)(out). Its activity is regulated as follows. Activated by phosphatidylinositol 4,5 biphosphate (PtdIns(4,5)P2). Inward rectifier potassium channels are characterized by a greater tendency to allow potassium to flow into the cell rather than out of it. Their voltage dependence is regulated by the concentration of extracellular potassium; as external potassium is raised, the voltage range of the channel opening shifts to more positive voltages. The inward rectification is mainly due to the blockage of outward current by internal magnesium. This potassium channel may be involved in the regulation of insulin secretion by glucose and/or neurotransmitters acting through G-protein-coupled receptors. The polypeptide is G protein-activated inward rectifier potassium channel 2 (KCNJ6) (Pongo abelii (Sumatran orangutan)).